Reading from the N-terminus, the 181-residue chain is Crossover junction endodeoxyribonuclease RuvC (181 aa).

Residues D7, E67, and D139 contribute to the active site. Positions 7, 67, and 139 each coordinate Mg(2+).

The protein belongs to the RuvC family. As to quaternary structure, homodimer which binds Holliday junction (HJ) DNA. The HJ becomes 2-fold symmetrical on binding to RuvC with unstacked arms; it has a different conformation from HJ DNA in complex with RuvA. In the full resolvosome a probable DNA-RuvA(4)-RuvB(12)-RuvC(2) complex forms which resolves the HJ. Mg(2+) is required as a cofactor.

It localises to the cytoplasm. It catalyses the reaction Endonucleolytic cleavage at a junction such as a reciprocal single-stranded crossover between two homologous DNA duplexes (Holliday junction).. In terms of biological role, the RuvA-RuvB-RuvC complex processes Holliday junction (HJ) DNA during genetic recombination and DNA repair. Endonuclease that resolves HJ intermediates. Cleaves cruciform DNA by making single-stranded nicks across the HJ at symmetrical positions within the homologous arms, yielding a 5'-phosphate and a 3'-hydroxyl group; requires a central core of homology in the junction. The consensus cleavage sequence is 5'-(A/T)TT(C/G)-3'. Cleavage occurs on the 3'-side of the TT dinucleotide at the point of strand exchange. HJ branch migration catalyzed by RuvA-RuvB allows RuvC to scan DNA until it finds its consensus sequence, where it cleaves and resolves the cruciform DNA. The sequence is that of Crossover junction endodeoxyribonuclease RuvC from Cupriavidus metallidurans (strain ATCC 43123 / DSM 2839 / NBRC 102507 / CH34) (Ralstonia metallidurans).